We begin with the raw amino-acid sequence, 119 residues long: C-C motif chemokine 24 (119 aa).

An N-terminal signal peptide occupies residues 1 to 26 (MAGLMTIVTSLLFLGVCAHHIIPTGS). 2 cysteine pairs are disulfide-bonded: Cys33–Cys58 and Cys34–Cys74. Residue Asn115 is glycosylated (N-linked (GlcNAc...) asparagine).

This sequence belongs to the intercrine beta (chemokine CC) family. N-glycosylated. In terms of tissue distribution, activated monocytes and activated T lymphocytes.

The protein localises to the secreted. Chemotactic for resting T-lymphocytes, and eosinophils. Has lower chemotactic activity for neutrophils but none for monocytes and activated lymphocytes. Is a strong suppressor of colony formation by a multipotential hematopoietic progenitor cell line. Binds to CCR3. The polypeptide is C-C motif chemokine 24 (Homo sapiens (Human)).